The following is a 196-amino-acid chain: Beta-crystallin A2 (196 aa).

The N-terminal arm stretch occupies residues 1–11; the sequence is MTSEAMDTLGQ. Beta/gamma crystallin 'Greek key' domains follow at residues 12–51 and 52–98; these read YKIT…KVES and GPWV…RPVK. Residues 99 to 104 form a connecting peptide region; the sequence is CANHND. 2 consecutive Beta/gamma crystallin 'Greek key' domains span residues 105-146 and 147-195; these read SKAI…KVNA and GAWV…RRIQ.

It belongs to the beta/gamma-crystallin family. Homo/heterodimer, or complexes of higher-order. The structure of beta-crystallin oligomers seems to be stabilized through interactions between the N-terminal arms.

Functionally, crystallins are the dominant structural components of the vertebrate eye lens. The protein is Beta-crystallin A2 (CRYBA2) of Gallus gallus (Chicken).